Reading from the N-terminus, the 66-residue chain is Putative alpha-neurotoxin RjAa13 (66 aa).

One can recognise an LCN-type CS-alpha/beta domain in the interval 1–60 (KEGYPVDWGNCKYECMSDAYCKDLCVDRKAKSGYCYKLNWSCYCEGLPDDSPIKTNGHCR). Intrachain disulfides connect cysteine 11-cysteine 59, cysteine 15-cysteine 35, cysteine 21-cysteine 42, and cysteine 25-cysteine 44.

This sequence belongs to the long (4 C-C) scorpion toxin superfamily. Sodium channel inhibitor family. Alpha subfamily. Expressed by the venom gland.

The protein localises to the secreted. Functionally, alpha toxins bind voltage-independently at site-3 of sodium channels (Nav) and inhibits the inactivation of the activated channels, thereby blocking neuronal transmission. In Rhopalurus junceus (Caribbean blue scorpion), this protein is Putative alpha-neurotoxin RjAa13.